We begin with the raw amino-acid sequence, 261 residues long: Putative carbamate hydrolase RutD (261 aa).

Residues 14–119 (PTILLSSGLG…LINAWSKADP (106 aa)) enclose the AB hydrolase-1 domain.

This sequence belongs to the AB hydrolase superfamily. Hydrolase RutD family.

It carries out the reaction carbamate + 2 H(+) = NH4(+) + CO2. Involved in pyrimidine catabolism. May facilitate the hydrolysis of carbamate, a reaction that can also occur spontaneously. The chain is Putative carbamate hydrolase RutD from Agrobacterium fabrum (strain C58 / ATCC 33970) (Agrobacterium tumefaciens (strain C58)).